The following is a 189-amino-acid chain: UPF0301 protein RC0043 (189 aa).

This sequence belongs to the UPF0301 (AlgH) family.

In Rickettsia conorii (strain ATCC VR-613 / Malish 7), this protein is UPF0301 protein RC0043.